The following is a 329-amino-acid chain: MIKNILLLCGGGSSEHEISLLSANFVEQQLNLIQNVKVTRVEIKNEGWVTDQGELVYLDLNTKQLCSNESNQTIDFIVPCIHGFPGETGDIQSLFEIAGIPYLGCGPEASSNSFNKITSKLWYDALDIPNTPYLFLTRNDEHAHRQAEQAFEKWGKVFVKAARQGSSVGCYSVAEKQAIAKAVNDAFGYSDQVLVEKAVKPRELEVAAYEMNGELHITKPGEVIAPDGAFYSYDEKYSSSSHSLTEVEAKNLTQEQIDKIRHASETVFKQMNLRHLSRIDFFLTEDNEIYLNEVNTFPGMTPISMFPKMLQNNGHKFHEFLEDCINSAK.

Residues 120–326 (KLWYDALDIP…FHEFLEDCIN (207 aa)) form the ATP-grasp domain. 150-205 (AFEKWGKVFVKAARQGSSVGCYSVAEKQAIAKAVNDAFGYSDQVLVEKAVKPRELE) serves as a coordination point for ATP. Mg(2+) contacts are provided by Asp280, Glu293, and Asn295.

Belongs to the D-alanine--D-alanine ligase family. Mg(2+) is required as a cofactor. Requires Mn(2+) as cofactor.

Its subcellular location is the cytoplasm. It carries out the reaction 2 D-alanine + ATP = D-alanyl-D-alanine + ADP + phosphate + H(+). It functions in the pathway cell wall biogenesis; peptidoglycan biosynthesis. Its function is as follows. Cell wall formation. This is D-alanine--D-alanine ligase from Vibrio parahaemolyticus serotype O3:K6 (strain RIMD 2210633).